The following is a 281-amino-acid chain: Nicotinamide/nicotinic acid mononucleotide adenylyltransferase 1 (281 aa).

2 residues coordinate beta-nicotinamide D-ribonucleotide: Gly15 and Ser16. NAD(+)-binding residues include Gly15, Ser16, Phe17, and Met23. ATP is bound at residue 15-17 (GSF). His24 provides a ligand contact to ATP. Beta-nicotinamide D-ribonucleotide contacts are provided by Tyr55 and Lys57. Lys57 is a binding site for NAD(+). ATP is bound at residue Lys58. Beta-nicotinamide D-ribonucleotide is bound by residues Trp92 and Thr95. Trp92 and Thr95 together coordinate NAD(+). A disordered region spans residues 113–143 (PQQNSPVLEKPGRKRKWAEQKQDISEKKSLE). A Phosphoserine modification is found at Ser117. Positions 123-129 (PGRKRKW) match the Nuclear localization signal motif. Basic and acidic residues predominate over residues 129 to 143 (WAEQKQDISEKKSLE). Gly158, Asp160, Leu170, Trp171, Glu217, and Asn221 together coordinate NAD(+). Residue 158–160 (GAD) participates in ATP binding. Residues Leu170 and Trp171 each contribute to the beta-nicotinamide D-ribonucleotide site. An ATP-binding site is contributed by 226 to 229 (TKIR).

Belongs to the eukaryotic NMN adenylyltransferase family. Homohexamer. Interacts with ADPRT/PARP1. The cofactor is Zn(2+). Mg(2+) serves as cofactor.

It localises to the nucleus. It catalyses the reaction beta-nicotinamide D-ribonucleotide + ATP + H(+) = diphosphate + NAD(+). The enzyme catalyses nicotinate beta-D-ribonucleotide + ATP + H(+) = deamido-NAD(+) + diphosphate. It participates in cofactor biosynthesis; NAD(+) biosynthesis; NAD(+) from nicotinamide D-ribonucleotide: step 1/1. It functions in the pathway cofactor biosynthesis; NAD(+) biosynthesis; deamido-NAD(+) from nicotinate D-ribonucleotide: step 1/1. Its activity is regulated as follows. Activity is strongly inhibited by galotannin. Inhibited by P1-(adenosine-5')-P4-(nicotinic-acid-riboside-5')-tetraphosphate (Nap4AD). Catalyzes the formation of NAD(+) from nicotinamide mononucleotide (NMN) and ATP. Can also use the deamidated form; nicotinic acid mononucleotide (NaMN) as substrate with the same efficiency. Can use triazofurin monophosphate (TrMP) as substrate. Also catalyzes the reverse reaction, i.e. the pyrophosphorolytic cleavage of NAD(+). For the pyrophosphorolytic activity, prefers NAD(+) and NaAD as substrates and degrades NADH, nicotinic acid adenine dinucleotide phosphate (NHD) and nicotinamide guanine dinucleotide (NGD) less effectively. Involved in the synthesis of ATP in the nucleus, together with PARP1, PARG and NUDT5. Nuclear ATP generation is required for extensive chromatin remodeling events that are energy-consuming. Fails to cleave phosphorylated dinucleotides NADP(+), NADPH and NaADP(+). Also acts as a cofactor for glutamate and aspartate ADP-ribosylation by directing PARP1 catalytic activity to glutamate and aspartate residues on histones. Protects against axonal degeneration following mechanical or toxic insults. Delays axonal degeneration after axotomy. Results in a &gt;10-fold increase in intact neurites 72 hours after injury. Neural protection does not correlate with cellular NAD(+) levels but may still require enzyme activity. The protein is Nicotinamide/nicotinic acid mononucleotide adenylyltransferase 1 (NMNAT1) of Bos taurus (Bovine).